The primary structure comprises 446 residues: Glucose-6-phosphate isomerase (446 aa).

Glu-288 (proton donor) is an active-site residue. Residues His-309 and Lys-423 contribute to the active site.

This sequence belongs to the GPI family.

Its subcellular location is the cytoplasm. The catalysed reaction is alpha-D-glucose 6-phosphate = beta-D-fructose 6-phosphate. It functions in the pathway carbohydrate biosynthesis; gluconeogenesis. It participates in carbohydrate degradation; glycolysis; D-glyceraldehyde 3-phosphate and glycerone phosphate from D-glucose: step 2/4. In terms of biological role, catalyzes the reversible isomerization of glucose-6-phosphate to fructose-6-phosphate. The polypeptide is Glucose-6-phosphate isomerase (Lactobacillus delbrueckii subsp. bulgaricus (strain ATCC 11842 / DSM 20081 / BCRC 10696 / JCM 1002 / NBRC 13953 / NCIMB 11778 / NCTC 12712 / WDCM 00102 / Lb 14)).